The following is an 84-amino-acid chain: FMRFamide-like neuropeptides 26 (84 aa).

A signal peptide spans 1–19 (MKVMFMLALLFSSLVATSA). The propeptide occupies 20-48 (FRLPFQFFGANEDFNSGLTKRNYYESKPY). Phenylalanine amide is present on residues Phe-61 and Phe-82.

Belongs to the FARP (FMRFamide related peptide) family. Each flp gene is expressed in a distinct set of neurons.

It localises to the secreted. Functionally, FMRFamides and FMRFamide-like peptides are neuropeptides. This Caenorhabditis elegans protein is FMRFamide-like neuropeptides 26.